The following is a 258-amino-acid chain: MLCLVVCCLIWLISALDGSCSEPPPVNNSVFVGKETEEQILGIYLCIKGYHLVGKKSLVFDPSKEWNSTLPECLLGHCPDPVLENGKINSSGPVNISGKIMFECNDGYILKGSNWSQCLEDHTWAPPLPICRSRDCEPPETPVHGYFEGETFTSGSVVTYYCEDGYHLVGTQKVQCSDGEWSPSYPTCESIQEPPKSAEQSALEKAILAFQESKDLCNATENFVRQLREGGITMEELKCSLEMKKTKLKSDILLNYHS.

The N-terminal stretch at 1–15 (MLCLVVCCLIWLISA) is a signal peptide. One can recognise a Sushi 1; atypical; lacks a Cys domain in the interval 18–75 (GSCSEPPPVNNSVFVGKETEEQILGIYLCIKGYHLVGKKSLVFDPSKEWNSTLPECLL). N-linked (GlcNAc...) asparagine glycosylation is found at N27, N67, N89, N95, and N114. 5 disulfides stabilise this stretch: C46–C73, C78–C118, C104–C131, C136–C176, and C162–C188. Sushi domains follow at residues 76–133 (GHCP…ICRS) and 134–190 (RDCE…TCES). Residue N218 is glycosylated (N-linked (GlcNAc...) asparagine).

As to quaternary structure, disulfide-linked complex of alpha and beta chains.

It is found in the secreted. Its function is as follows. Controls the classical pathway of complement activation. It binds as a cofactor to C3b/C4b inactivator (C3bINA), which then hydrolyzes the complement fragment C4b. It also accelerates the degradation of the C4bC2a complex (C3 convertase) by dissociating the complement fragment C2a. It also interacts with anticoagulant protein S and with serum amyloid P component. This is C4b-binding protein beta chain (C4bpb) from Rattus norvegicus (Rat).